Here is a 287-residue protein sequence, read N- to C-terminus: MSTDALSDSPLKIGSHTLTSRLLVGTGRYDTMEQMRDSLDASGTECVTVAVRRERLYERTGQNILDFIDSDRYILLPNTAGCYTAADAVRAANLGREILRTLGNPGSDWVKLEVLGDSKTLLPDPVETVAACEQLAADGFSVLCYTSDCPVTAQRLKKVGAAAVMPAGSPIGSGAGILNPANLQIILEYLKEDDEDYPVIIDAGVGTASDVSVAMELGADGVLLNTAIAHAREPVRMAHAMRMAVDAGRHAALAGRIPKRLYGTASSPQEGVISTRPYGSQADEIGS.

Residue Lys-111 is the Schiff-base intermediate with DXP of the active site. 1-deoxy-D-xylulose 5-phosphate contacts are provided by residues Gly-172, 203–204 (AG), and 225–226 (NT). Residues 268–287 (PQEGVISTRPYGSQADEIGS) form a disordered region.

Belongs to the ThiG family. Homotetramer. Forms heterodimers with either ThiH or ThiS.

It is found in the cytoplasm. It catalyses the reaction [ThiS sulfur-carrier protein]-C-terminal-Gly-aminoethanethioate + 2-iminoacetate + 1-deoxy-D-xylulose 5-phosphate = [ThiS sulfur-carrier protein]-C-terminal Gly-Gly + 2-[(2R,5Z)-2-carboxy-4-methylthiazol-5(2H)-ylidene]ethyl phosphate + 2 H2O + H(+). It participates in cofactor biosynthesis; thiamine diphosphate biosynthesis. Catalyzes the rearrangement of 1-deoxy-D-xylulose 5-phosphate (DXP) to produce the thiazole phosphate moiety of thiamine. Sulfur is provided by the thiocarboxylate moiety of the carrier protein ThiS. In vitro, sulfur can be provided by H(2)S. This is Thiazole synthase from Rhodopirellula baltica (strain DSM 10527 / NCIMB 13988 / SH1).